Reading from the N-terminus, the 247-residue chain is GTP cyclohydrolase 1 type 2 homolog (247 aa).

A divalent metal cation contacts are provided by His-63, His-64, Asp-101, His-215, and Glu-219.

Belongs to the GTP cyclohydrolase I type 2/NIF3 family. As to quaternary structure, homohexamer.

In Buchnera aphidicola subsp. Schizaphis graminum (strain Sg), this protein is GTP cyclohydrolase 1 type 2 homolog.